A 601-amino-acid chain; its full sequence is Serine/threonine-protein phosphatase 2A 65 kDa regulatory subunit A beta isoform (601 aa).

The residue at position 2 (Ala-2) is an N-acetylalanine. HEAT repeat units follow at residues 20 to 58 (DSLY…GVER), 59 to 96 (TRSE…GGPD), 97 to 135 (FAHC…TPVA), 136 to 173 (LEAY…ASNA), 174 to 212 (VKAE…ELDS), 213 to 251 (VKSE…SQDD), 252 to 290 (LETL…GPKI), 291 to 333 (TLND…RETI), 334 to 372 (IMNQ…GKEN), 373 to 411 (TIEH…GIRQ), 412 to 450 (LSQS…GVEF), 451 to 489 (FDEK…GTEW), 490 to 528 (AQNT…GQEI), 529 to 567 (TTKQ…DTNA), and 568 to 601 (LQGE…LALA).

Belongs to the phosphatase 2A regulatory subunit A family. PP2A consists of a common heterodimeric core enzyme, composed of a 36 kDa catalytic subunit (subunit C) and a 65 kDa constant regulatory subunit (PR65 or subunit A), that associates with a variety of regulatory subunits. Proteins that associate with the core dimer include three families of regulatory subunits B (the R2/B/PR55/B55, R3/B''/PR72/PR130/PR59 and R5/B'/B56 families), the 48 kDa variable regulatory subunit, viral proteins, and cell signaling molecules. Interacts with IPO9. Interacts with SGO1. Interacts with RAF1.

In terms of biological role, the PR65 subunit of protein phosphatase 2A serves as a scaffolding molecule to coordinate the assembly of the catalytic subunit and a variable regulatory B subunit. The chain is Serine/threonine-protein phosphatase 2A 65 kDa regulatory subunit A beta isoform (PPP2R1B) from Homo sapiens (Human).